The chain runs to 177 residues: MFHVSFRYIFGLPPLILVLLPVASSDCDIEGKDGKQYESVLMVSIDQLLDSMKEIGSNCLNNEFNFFKRHICDANKEGMFLFRAARKLRQFLKMNSTGDFDLHLLKVSEGTTILLNCTGQVKGRKPAALGEAQPTKSLEENKSLKEQKKLNDLCFLKRLLQEIKTCWNKILMGTKEH.

The N-terminal stretch at 1–25 (MFHVSFRYIFGLPPLILVLLPVASS) is a signal peptide. Cystine bridges form between Cys27–Cys166, Cys59–Cys154, and Cys72–Cys117. N-linked (GlcNAc...) asparagine glycans are attached at residues Asn95, Asn116, and Asn141.

This sequence belongs to the IL-7/IL-9 family. In terms of assembly, interacts with IL7R and CSF2RG.

Its subcellular location is the secreted. Functionally, hematopoietic cytokine that plays an essential role in the development, expansion, and survival of naive and memory T-cells and B-cells thereby regulating the number of mature lymphocytes and maintaining lymphoid homeostasis. Mechanistically, exerts its biological effects through a receptor composed of IL7RA subunit and the cytokine receptor common subunit gamma/CSF2RG. Binding to the receptor leads to activation of various kinases including JAK1 or JAK3 depending on the cell type and subsequently propagation of signals through activation of several downstream signaling pathways including the PI3K/Akt/mTOR or the JAK-STAT5. This chain is Interleukin-7 (IL7), found in Homo sapiens (Human).